Here is a 258-residue protein sequence, read N- to C-terminus: Ribosomal RNA small subunit methyltransferase J (258 aa).

Residues Glu-123–Arg-124 and Asp-177 contribute to the S-adenosyl-L-methionine site. The interval Ile-232 to Ala-258 is disordered. The span at His-239–Pro-252 shows a compositional bias: basic and acidic residues.

Belongs to the methyltransferase superfamily. RsmJ family.

The protein localises to the cytoplasm. It catalyses the reaction guanosine(1516) in 16S rRNA + S-adenosyl-L-methionine = N(2)-methylguanosine(1516) in 16S rRNA + S-adenosyl-L-homocysteine + H(+). Specifically methylates the guanosine in position 1516 of 16S rRNA. The protein is Ribosomal RNA small subunit methyltransferase J of Pseudomonas putida (strain GB-1).